The sequence spans 405 residues: Glucan 1,3-beta-glucosidase A (405 aa).

A signal peptide spans 1–14; the sequence is MLPLLLCIVPYCWS. The Proton donor role is filled by Glu199. 2 disulfides stabilise this stretch: Cys280/Cys405 and Cys306/Cys332. The active-site Nucleophile is Glu298.

The protein belongs to the glycosyl hydrolase 5 (cellulase A) family. Monomer. Requires Mn(2+) as cofactor.

The protein resides in the secreted. The enzyme catalyses Successive hydrolysis of beta-D-glucose units from the non-reducing ends of (1-&gt;3)-beta-D-glucans, releasing alpha-glucose.. In terms of biological role, beta-glucanases participate in the metabolism of beta-glucan, the main structural component of the cell wall. It could also function biosynthetically as a transglycosylase. This Aspergillus oryzae (strain ATCC 42149 / RIB 40) (Yellow koji mold) protein is Glucan 1,3-beta-glucosidase A (exgA).